An 89-amino-acid chain; its full sequence is Small ribosomal subunit protein uS15 (89 aa).

Belongs to the universal ribosomal protein uS15 family. Part of the 30S ribosomal subunit. Forms a bridge to the 50S subunit in the 70S ribosome, contacting the 23S rRNA.

In terms of biological role, one of the primary rRNA binding proteins, it binds directly to 16S rRNA where it helps nucleate assembly of the platform of the 30S subunit by binding and bridging several RNA helices of the 16S rRNA. Its function is as follows. Forms an intersubunit bridge (bridge B4) with the 23S rRNA of the 50S subunit in the ribosome. This chain is Small ribosomal subunit protein uS15, found in Janthinobacterium sp. (strain Marseille) (Minibacterium massiliensis).